The chain runs to 345 residues: N-acetyl-gamma-glutamyl-phosphate reductase (345 aa).

Residue Cys149 is part of the active site.

It belongs to the NAGSA dehydrogenase family. Type 1 subfamily.

It is found in the cytoplasm. It catalyses the reaction N-acetyl-L-glutamate 5-semialdehyde + phosphate + NADP(+) = N-acetyl-L-glutamyl 5-phosphate + NADPH + H(+). It functions in the pathway amino-acid biosynthesis; L-arginine biosynthesis; N(2)-acetyl-L-ornithine from L-glutamate: step 3/4. Catalyzes the NADPH-dependent reduction of N-acetyl-5-glutamyl phosphate to yield N-acetyl-L-glutamate 5-semialdehyde. In Bacillus cereus (strain 03BB102), this protein is N-acetyl-gamma-glutamyl-phosphate reductase.